A 466-amino-acid polypeptide reads, in one-letter code: ATP synthase subunit beta (466 aa).

155-162 (GGAGVGKT) serves as a coordination point for ATP.

This sequence belongs to the ATPase alpha/beta chains family. F-type ATPases have 2 components, CF(1) - the catalytic core - and CF(0) - the membrane proton channel. CF(1) has five subunits: alpha(3), beta(3), gamma(1), delta(1), epsilon(1). CF(0) has three main subunits: a(1), b(2) and c(9-12). The alpha and beta chains form an alternating ring which encloses part of the gamma chain. CF(1) is attached to CF(0) by a central stalk formed by the gamma and epsilon chains, while a peripheral stalk is formed by the delta and b chains.

Its subcellular location is the cell inner membrane. It catalyses the reaction ATP + H2O + 4 H(+)(in) = ADP + phosphate + 5 H(+)(out). In terms of biological role, produces ATP from ADP in the presence of a proton gradient across the membrane. The catalytic sites are hosted primarily by the beta subunits. This Bordetella pertussis (strain Tohama I / ATCC BAA-589 / NCTC 13251) protein is ATP synthase subunit beta.